A 567-amino-acid polypeptide reads, in one-letter code: Urease subunit alpha (567 aa).

Residues 129–567 (GGVDTHIHFI…LPMAQRYFLF (439 aa)) form the Urease domain. Ni(2+) contacts are provided by His134, His136, and Lys217. Lys217 is subject to N6-carboxylysine. His219 lines the substrate pocket. The Ni(2+) site is built by His246 and His272. His320 (proton donor) is an active-site residue. Residue Asp360 participates in Ni(2+) binding.

The protein belongs to the metallo-dependent hydrolases superfamily. Urease alpha subunit family. In terms of assembly, heterotrimer of UreA (gamma), UreB (beta) and UreC (alpha) subunits. Three heterotrimers associate to form the active enzyme. Ni cation is required as a cofactor. In terms of processing, carboxylation allows a single lysine to coordinate two nickel ions.

It localises to the cytoplasm. It catalyses the reaction urea + 2 H2O + H(+) = hydrogencarbonate + 2 NH4(+). The protein operates within nitrogen metabolism; urea degradation; CO(2) and NH(3) from urea (urease route): step 1/1. The protein is Urease subunit alpha of Proteus hauseri.